The chain runs to 700 residues: Hedgehog-interacting protein (700 aa).

The first 17 residues, 1–17 (MLKMLSFKLLLLAVALG), serve as a signal peptide directing secretion. Residue Asn-99 is glycosylated (N-linked (GlcNAc...) asparagine). Intrachain disulfides connect Cys-216-Cys-536, Cys-218-Cys-543, Cys-402-Cys-624, Cys-435-Cys-452, Cys-500-Cys-594, Cys-608-Cys-617, Cys-612-Cys-623, Cys-625-Cys-634, Cys-639-Cys-649, Cys-643-Cys-655, and Cys-657-Cys-666. The interaction with SHH zinc binding site stretch occupies residues 376–388 (LDDMEEMDGLSDF). Position 383 (Asp-383) interacts with Zn(2+). Residues Asn-416, Asn-447, and Asn-459 are each glycosylated (N-linked (GlcNAc...) asparagine). EGF-like domains follow at residues 607-634 (ECSRLCRNGYCTPTGKCCCSPGWEGDFC) and 635-667 (RTAKCEPACRHGGVCVRPNKCLCKKGYLGPQCE).

Belongs to the HHIP family. Interacts with all three hedgehog family members, SHH, IHH and DHH. As to expression, widely expressed in fetal and adult tissues. Highest expression in adult heart, liver and pancreas, and in fetal kidney.

It is found in the cell membrane. Its subcellular location is the secreted. It localises to the cytoplasm. Its function is as follows. Modulates hedgehog signaling in several cell types including brain and lung through direct interaction with members of the hedgehog family. The protein is Hedgehog-interacting protein (HHIP) of Homo sapiens (Human).